A 268-amino-acid chain; its full sequence is Imidazole glycerol phosphate synthase subunit HisF (268 aa).

Residues D12 and D131 contribute to the active site.

Belongs to the HisA/HisF family. As to quaternary structure, heterodimer of HisH and HisF.

The protein resides in the cytoplasm. It carries out the reaction 5-[(5-phospho-1-deoxy-D-ribulos-1-ylimino)methylamino]-1-(5-phospho-beta-D-ribosyl)imidazole-4-carboxamide + L-glutamine = D-erythro-1-(imidazol-4-yl)glycerol 3-phosphate + 5-amino-1-(5-phospho-beta-D-ribosyl)imidazole-4-carboxamide + L-glutamate + H(+). It participates in amino-acid biosynthesis; L-histidine biosynthesis; L-histidine from 5-phospho-alpha-D-ribose 1-diphosphate: step 5/9. Functionally, IGPS catalyzes the conversion of PRFAR and glutamine to IGP, AICAR and glutamate. The HisF subunit catalyzes the cyclization activity that produces IGP and AICAR from PRFAR using the ammonia provided by the HisH subunit. The sequence is that of Imidazole glycerol phosphate synthase subunit HisF from Methanosphaerula palustris (strain ATCC BAA-1556 / DSM 19958 / E1-9c).